We begin with the raw amino-acid sequence, 196 residues long: Protein TEX261 (196 aa).

5 helical membrane passes run 3–23, 42–62, 70–90, 97–117, and 125–145; these read FMYLLSWLSLFIQVAFITLAV, SRIIKYMIWFSTAVLIGLYVF, IGVGLFTNLVYFGLLQTFPFI, FILSCGLVVVNHYLACQFFAE, and VLAYFTFCLWIIPFAFFVSLS.

This sequence belongs to the SVP26 family.

The protein resides in the membrane. The protein is Protein TEX261 (TEX261) of Pongo abelii (Sumatran orangutan).